A 186-amino-acid chain; its full sequence is Type 1 phosphatases regulator ypi-1 (186 aa).

Residues 1–32 (MTSVAQRQAQPAQPSTSQTAAPTRTQTETSSP) show a composition bias toward polar residues. Residues 1–186 (MTSVAQRQAQ…SETQGPGGSK (186 aa)) are disordered. Low complexity predominate over residues 82 to 94 (DSSSSSDSSSSSD). Residues 122 to 137 (HDHDHDGREGGCNHDH) show a composition bias toward basic and acidic residues. The segment covering 138-151 (GRGRKHGNKGKKTE) has biased composition (basic residues).

This sequence belongs to the YPI1 family.

It is found in the nucleus. Regulator of type 1 phosphatases which maintains protein phosphatase activity under strict control. In Neurospora crassa (strain ATCC 24698 / 74-OR23-1A / CBS 708.71 / DSM 1257 / FGSC 987), this protein is Type 1 phosphatases regulator ypi-1 (ypi-1).